The chain runs to 33 residues: Beta-theraphotoxin-Cm1a (33 aa).

3 disulfides stabilise this stretch: C2/C17, C9/C22, and C16/C29. The residue at position 33 (L33) is a Leucine amide.

It belongs to the neurotoxin 10 (Hwtx-1) family. 04 (CcoTx1) subfamily. As to expression, expressed by the venom gland.

It is found in the secreted. Inhibits many voltage-gated sodium channels and one voltage-gated calcium channel (Cav2.2/CACNA1B (IC(50)=400 nM), Nav1.2/SCN2A (IC(50)=3-70 nM), Nav1.1/SCN1A (IC(50)=523-1060 nM), Nav1.7/SCN9A (IC(50)=129.1-5120 nM), Nav1.4/SCN4A (IC(50)=263-888 nM or &gt;10 uM) and Nav1.5/SCN5A (IC(50)=188-323 nM or &gt;10 uM)). It acts by shifting the voltage dependence of channel activation to more depolarized potentials and by blocking the inward component of the sodium current. It shows moderate affinity for lipid bilayers. On Nav1.7/SCN9A, it has been shown to interact with the S3-S4 loop of domain DII (site 4). Is significantly more potent against Nav1.2/SCN2A than the other Nav channel subtypes. In vivo, this toxin causes general ataxia, lack of response to stimuli, and semiparalysis. After a few minutes, the mice are unable to stand, and breathing is reduced in rhythm and intensity. Symptoms gradually increase with progressive slowing of breathing and flaccid paralysis, death occurred within 10 to 20 minutes post injection. Animals remain totally flaccid, and no symptoms of excitatory neurotoxicity are observed. The protein is Beta-theraphotoxin-Cm1a of Ceratogyrus marshalli (Straighthorned baboon tarantula).